The following is a 508-amino-acid chain: Photosystem II CP47 reaction center protein (508 aa).

Helical transmembrane passes span 21-36 (SVHI…WAGS), 101-115 (IVFS…IWHW), 140-156 (GIHL…FGAF), 203-218 (IAAG…FHLS), 237-252 (VLSS…AFVV), and 457-472 (SFAL…HGSR).

Belongs to the PsbB/PsbC family. PsbB subfamily. As to quaternary structure, PSII is composed of 1 copy each of membrane proteins PsbA, PsbB, PsbC, PsbD, PsbE, PsbF, PsbH, PsbI, PsbJ, PsbK, PsbL, PsbM, PsbT, PsbX, PsbY, PsbZ, Psb30/Ycf12, at least 3 peripheral proteins of the oxygen-evolving complex and a large number of cofactors. It forms dimeric complexes. Binds multiple chlorophylls. PSII binds additional chlorophylls, carotenoids and specific lipids. serves as cofactor.

Its subcellular location is the plastid. The protein resides in the chloroplast thylakoid membrane. Functionally, one of the components of the core complex of photosystem II (PSII). It binds chlorophyll and helps catalyze the primary light-induced photochemical processes of PSII. PSII is a light-driven water:plastoquinone oxidoreductase, using light energy to abstract electrons from H(2)O, generating O(2) and a proton gradient subsequently used for ATP formation. The sequence is that of Photosystem II CP47 reaction center protein from Helianthus annuus (Common sunflower).